An 89-amino-acid polypeptide reads, in one-letter code: Small ribosomal subunit protein uS15 (89 aa).

Belongs to the universal ribosomal protein uS15 family. In terms of assembly, part of the 30S ribosomal subunit. Forms a bridge to the 50S subunit in the 70S ribosome, contacting the 23S rRNA.

One of the primary rRNA binding proteins, it binds directly to 16S rRNA where it helps nucleate assembly of the platform of the 30S subunit by binding and bridging several RNA helices of the 16S rRNA. In terms of biological role, forms an intersubunit bridge (bridge B4) with the 23S rRNA of the 50S subunit in the ribosome. This chain is Small ribosomal subunit protein uS15, found in Mycobacterium bovis (strain ATCC BAA-935 / AF2122/97).